The chain runs to 522 residues: Protein nucleotidyltransferase YdiU (522 aa).

ATP is bound by residues glycine 109, glycine 111, arginine 112, lysine 132, aspartate 144, glycine 145, arginine 195, and arginine 202. Aspartate 271 functions as the Proton acceptor in the catalytic mechanism. Asparagine 272 and aspartate 281 together coordinate Mg(2+). Aspartate 281 serves as a coordination point for ATP.

This sequence belongs to the SELO family. It depends on Mg(2+) as a cofactor. The cofactor is Mn(2+).

It catalyses the reaction L-seryl-[protein] + ATP = 3-O-(5'-adenylyl)-L-seryl-[protein] + diphosphate. The catalysed reaction is L-threonyl-[protein] + ATP = 3-O-(5'-adenylyl)-L-threonyl-[protein] + diphosphate. The enzyme catalyses L-tyrosyl-[protein] + ATP = O-(5'-adenylyl)-L-tyrosyl-[protein] + diphosphate. It carries out the reaction L-histidyl-[protein] + UTP = N(tele)-(5'-uridylyl)-L-histidyl-[protein] + diphosphate. It catalyses the reaction L-seryl-[protein] + UTP = O-(5'-uridylyl)-L-seryl-[protein] + diphosphate. The catalysed reaction is L-tyrosyl-[protein] + UTP = O-(5'-uridylyl)-L-tyrosyl-[protein] + diphosphate. In terms of biological role, nucleotidyltransferase involved in the post-translational modification of proteins. It can catalyze the addition of adenosine monophosphate (AMP) or uridine monophosphate (UMP) to a protein, resulting in modifications known as AMPylation and UMPylation. In Burkholderia lata (strain ATCC 17760 / DSM 23089 / LMG 22485 / NCIMB 9086 / R18194 / 383), this protein is Protein nucleotidyltransferase YdiU.